The primary structure comprises 331 residues: MSSDTLHKYEALPEDHRNVALRPCLIEEFVGQTEVIKNLKVFIQSAYERREPMDHVLLYGPPGLGKTTLAHIIAKELKVNFRSTAGPLLSKAGDLAAILTNLQPMDVLFIDEIHRLNRNIEEVLYSAMEDYCLDIVVGEGCGARTLKIDIPAFTLIGATTRFGLISNPLRDRFGIPLHLEFYSVDELVLVIKRAAGVICTSIDDSGAREIASRSRGTPRIALRLFRRVRDFLEFERKHGTIDGNFANSALFRLGIDGAGFDKMDLKYLKFVFEAKGPVGIDTIASALSEDVGNIEETIEPYLIKTCFIQRTPRGRVLTQKGFEYLLSSKYI.

A large ATPase domain (RuvB-L) region spans residues 1-182 (MSSDTLHKYE…FGIPLHLEFY (182 aa)). Residues Leu-21, Arg-22, Gly-63, Lys-66, Thr-67, Thr-68, 129-131 (EDY), Arg-172, Tyr-182, and Arg-219 contribute to the ATP site. Thr-67 is a Mg(2+) binding site. The small ATPAse domain (RuvB-S) stretch occupies residues 183–254 (SVDELVLVIK…FANSALFRLG (72 aa)). Residues 257–331 (GAGFDKMDLK…FEYLLSSKYI (75 aa)) form a head domain (RuvB-H) region. Residues Arg-310 and Arg-315 each coordinate DNA.

The protein belongs to the RuvB family. As to quaternary structure, homohexamer. Forms an RuvA(8)-RuvB(12)-Holliday junction (HJ) complex. HJ DNA is sandwiched between 2 RuvA tetramers; dsDNA enters through RuvA and exits via RuvB. An RuvB hexamer assembles on each DNA strand where it exits the tetramer. Each RuvB hexamer is contacted by two RuvA subunits (via domain III) on 2 adjacent RuvB subunits; this complex drives branch migration. In the full resolvosome a probable DNA-RuvA(4)-RuvB(12)-RuvC(2) complex forms which resolves the HJ.

It localises to the cytoplasm. The catalysed reaction is ATP + H2O = ADP + phosphate + H(+). In terms of biological role, the RuvA-RuvB-RuvC complex processes Holliday junction (HJ) DNA during genetic recombination and DNA repair, while the RuvA-RuvB complex plays an important role in the rescue of blocked DNA replication forks via replication fork reversal (RFR). RuvA specifically binds to HJ cruciform DNA, conferring on it an open structure. The RuvB hexamer acts as an ATP-dependent pump, pulling dsDNA into and through the RuvAB complex. RuvB forms 2 homohexamers on either side of HJ DNA bound by 1 or 2 RuvA tetramers; 4 subunits per hexamer contact DNA at a time. Coordinated motions by a converter formed by DNA-disengaged RuvB subunits stimulates ATP hydrolysis and nucleotide exchange. Immobilization of the converter enables RuvB to convert the ATP-contained energy into a lever motion, pulling 2 nucleotides of DNA out of the RuvA tetramer per ATP hydrolyzed, thus driving DNA branch migration. The RuvB motors rotate together with the DNA substrate, which together with the progressing nucleotide cycle form the mechanistic basis for DNA recombination by continuous HJ branch migration. Branch migration allows RuvC to scan DNA until it finds its consensus sequence, where it cleaves and resolves cruciform DNA. The polypeptide is Holliday junction branch migration complex subunit RuvB (Anaplasma marginale (strain St. Maries)).